Reading from the N-terminus, the 84-residue chain is Cell division topological specificity factor (84 aa).

The protein belongs to the MinE family.

Its function is as follows. Prevents the cell division inhibition by proteins MinC and MinD at internal division sites while permitting inhibition at polar sites. This ensures cell division at the proper site by restricting the formation of a division septum at the midpoint of the long axis of the cell. In Cupriavidus metallidurans (strain ATCC 43123 / DSM 2839 / NBRC 102507 / CH34) (Ralstonia metallidurans), this protein is Cell division topological specificity factor.